Here is a 609-residue protein sequence, read N- to C-terminus: UvrABC system protein C (609 aa).

In terms of domain architecture, GIY-YIG spans 13 to 91 (HEPGVYRMYD…IKLYQPRYNV (79 aa)). Positions 201-236 (QQVLDYLIGKMEQASRNLDFEQAARYRDQIQAVRSV) constitute a UVR domain.

The protein belongs to the UvrC family. In terms of assembly, interacts with UvrB in an incision complex.

It localises to the cytoplasm. Its function is as follows. The UvrABC repair system catalyzes the recognition and processing of DNA lesions. UvrC both incises the 5' and 3' sides of the lesion. The N-terminal half is responsible for the 3' incision and the C-terminal half is responsible for the 5' incision. This chain is UvrABC system protein C, found in Haemophilus influenzae (strain ATCC 51907 / DSM 11121 / KW20 / Rd).